The primary structure comprises 891 residues: Translation initiation factor IF-2 (891 aa).

The tr-type G domain occupies 390–559; that stretch reads NRAPIVTIMG…LLQSDMLELK (170 aa). The G1 stretch occupies residues 399 to 406; it reads GHVDHGKT. A GTP-binding site is contributed by 399–406; that stretch reads GHVDHGKT. The tract at residues 424 to 428 is G2; that stretch reads GITQS. A G3 region spans residues 445–448; sequence DTPG. Residues 445–449 and 499–502 each bind GTP; these read DTPGH and NKID. The interval 499 to 502 is G4; sequence NKID. The interval 535–537 is G5; sequence SAT.

This sequence belongs to the TRAFAC class translation factor GTPase superfamily. Classic translation factor GTPase family. IF-2 subfamily.

Its subcellular location is the cytoplasm. Functionally, one of the essential components for the initiation of protein synthesis. Protects formylmethionyl-tRNA from spontaneous hydrolysis and promotes its binding to the 30S ribosomal subunits. Also involved in the hydrolysis of GTP during the formation of the 70S ribosomal complex. The protein is Translation initiation factor IF-2 of Blochmanniella pennsylvanica (strain BPEN).